The sequence spans 170 residues: Photosystem II extrinsic protein V (170 aa).

A signal peptide spans 1–33 (MASFFSTLRRSLNRLLIALPVLLGLMISTPAQA). C70, C73, H74, and H125 together coordinate heme c.

It belongs to the cytochrome c family. PsbV subfamily. In terms of assembly, PSII is composed of 1 copy each of membrane proteins PsbA, PsbB, PsbC, PsbD, PsbE, PsbF, PsbH, PsbI, PsbJ, PsbK, PsbL, PsbM, PsbT, PsbX, PsbY, PsbZ, Psb30/Ycf12, peripheral proteins PsbO, CyanoQ (PsbQ), PsbU, PsbV and a large number of cofactors. It forms dimeric complexes. Requires heme c as cofactor.

It localises to the cellular thylakoid membrane. In terms of biological role, one of the extrinsic, lumenal subunits of photosystem II (PSII). PSII is a light-driven water plastoquinone oxidoreductase, using light energy to abstract electrons from H(2)O, generating a proton gradient subsequently used for ATP formation. The extrinsic proteins stabilize the structure of photosystem II oxygen-evolving complex (OEC), the ion environment of oxygen evolution and protect the OEC against heat-induced inactivation. Low-potential cytochrome c that plays a role in the OEC of PSII. In Synechococcus sp. (strain CC9311), this protein is Photosystem II extrinsic protein V.